Reading from the N-terminus, the 452-residue chain is Bifunctional protein GlmU (452 aa).

The segment at 1-226 is pyrophosphorylase; the sequence is MSLTTVILAA…PMEVEGANNR (226 aa). Residues 8 to 11, K22, Q73, 78 to 79, 100 to 102, G137, E151, N166, and N224 contribute to the UDP-N-acetyl-alpha-D-glucosamine site; these read LAAG, GT, and YGD. D102 provides a ligand contact to Mg(2+). N224 contacts Mg(2+). A linker region spans residues 227–247; that stretch reads IQLAGLERAYQAWQAQELMLN. The N-acetyltransferase stretch occupies residues 248–452; it reads GATLADPARI…LDGWKRPVKK (205 aa). 2 residues coordinate UDP-N-acetyl-alpha-D-glucosamine: R330 and K348. The active-site Proton acceptor is H360. UDP-N-acetyl-alpha-D-glucosamine contacts are provided by Y363 and N374. Residues A377, 383 to 384, S402, A420, and R437 contribute to the acetyl-CoA site; that span reads NY.

The protein in the N-terminal section; belongs to the N-acetylglucosamine-1-phosphate uridyltransferase family. This sequence in the C-terminal section; belongs to the transferase hexapeptide repeat family. In terms of assembly, homotrimer. It depends on Mg(2+) as a cofactor.

Its subcellular location is the cytoplasm. It carries out the reaction alpha-D-glucosamine 1-phosphate + acetyl-CoA = N-acetyl-alpha-D-glucosamine 1-phosphate + CoA + H(+). It catalyses the reaction N-acetyl-alpha-D-glucosamine 1-phosphate + UTP + H(+) = UDP-N-acetyl-alpha-D-glucosamine + diphosphate. The protein operates within nucleotide-sugar biosynthesis; UDP-N-acetyl-alpha-D-glucosamine biosynthesis; N-acetyl-alpha-D-glucosamine 1-phosphate from alpha-D-glucosamine 6-phosphate (route II): step 2/2. Its pathway is nucleotide-sugar biosynthesis; UDP-N-acetyl-alpha-D-glucosamine biosynthesis; UDP-N-acetyl-alpha-D-glucosamine from N-acetyl-alpha-D-glucosamine 1-phosphate: step 1/1. It participates in bacterial outer membrane biogenesis; LPS lipid A biosynthesis. Catalyzes the last two sequential reactions in the de novo biosynthetic pathway for UDP-N-acetylglucosamine (UDP-GlcNAc). The C-terminal domain catalyzes the transfer of acetyl group from acetyl coenzyme A to glucosamine-1-phosphate (GlcN-1-P) to produce N-acetylglucosamine-1-phosphate (GlcNAc-1-P), which is converted into UDP-GlcNAc by the transfer of uridine 5-monophosphate (from uridine 5-triphosphate), a reaction catalyzed by the N-terminal domain. The polypeptide is Bifunctional protein GlmU (Pseudoalteromonas translucida (strain TAC 125)).